The sequence spans 348 residues: GTPase Obg (348 aa).

Positions M1 to M159 constitute an Obg domain. The OBG-type G domain maps to A160–S331. Residues G166 to S173, F191 to I195, D213 to G216, N283 to D286, and S312 to R314 each bind GTP. Mg(2+)-binding residues include S173 and T193.

Belongs to the TRAFAC class OBG-HflX-like GTPase superfamily. OBG GTPase family. In terms of assembly, monomer. Requires Mg(2+) as cofactor.

The protein localises to the cytoplasm. Its function is as follows. An essential GTPase which binds GTP, GDP and possibly (p)ppGpp with moderate affinity, with high nucleotide exchange rates and a fairly low GTP hydrolysis rate. Plays a role in control of the cell cycle, stress response, ribosome biogenesis and in those bacteria that undergo differentiation, in morphogenesis control. In Syntrophobacter fumaroxidans (strain DSM 10017 / MPOB), this protein is GTPase Obg.